The sequence spans 198 residues: Ribonuclease HII (198 aa).

One can recognise an RNase H type-2 domain in the interval 14–198; it reads GVIAGVDEVG…RNFAPISRAL (185 aa). The a divalent metal cation site is built by Asp-20, Glu-21, and Asp-112.

It belongs to the RNase HII family. Requires Mn(2+) as cofactor. It depends on Mg(2+) as a cofactor.

Its subcellular location is the cytoplasm. It catalyses the reaction Endonucleolytic cleavage to 5'-phosphomonoester.. In terms of biological role, endonuclease that specifically degrades the RNA of RNA-DNA hybrids. In Wolbachia sp. subsp. Drosophila simulans (strain wRi), this protein is Ribonuclease HII.